Here is a 78-residue protein sequence, read N- to C-terminus: Small ribosomal subunit protein bS18 (78 aa).

The protein belongs to the bacterial ribosomal protein bS18 family. Part of the 30S ribosomal subunit. Forms a tight heterodimer with protein bS6.

Functionally, binds as a heterodimer with protein bS6 to the central domain of the 16S rRNA, where it helps stabilize the platform of the 30S subunit. This Kocuria rhizophila (strain ATCC 9341 / DSM 348 / NBRC 103217 / DC2201) protein is Small ribosomal subunit protein bS18.